Here is a 724-residue protein sequence, read N- to C-terminus: Ribosomal RNA large subunit methyltransferase K/L (724 aa).

The 112-residue stretch at 42–153 (DAQRLVLWSR…KGRATLSVDL (112 aa)) folds into the THUMP domain.

This sequence belongs to the methyltransferase superfamily. RlmKL family.

The protein resides in the cytoplasm. It catalyses the reaction guanosine(2445) in 23S rRNA + S-adenosyl-L-methionine = N(2)-methylguanosine(2445) in 23S rRNA + S-adenosyl-L-homocysteine + H(+). The enzyme catalyses guanosine(2069) in 23S rRNA + S-adenosyl-L-methionine = N(2)-methylguanosine(2069) in 23S rRNA + S-adenosyl-L-homocysteine + H(+). Specifically methylates the guanine in position 2445 (m2G2445) and the guanine in position 2069 (m7G2069) of 23S rRNA. In Xylella fastidiosa (strain M23), this protein is Ribosomal RNA large subunit methyltransferase K/L.